The sequence spans 204 residues: Large ribosomal subunit protein uL13 (204 aa).

The protein belongs to the universal ribosomal protein uL13 family.

This Choristoneura parallela (Spotted fireworm moth) protein is Large ribosomal subunit protein uL13 (RpL13A).